The chain runs to 304 residues: Malate dehydrogenase (304 aa).

Residues 8–14 (GAAGTVG) and Asp-34 each bind NAD(+). Residues Arg-83 and Arg-89 each contribute to the substrate site. NAD(+) contacts are provided by residues Asn-96 and 119–121 (TSN). The substrate site is built by Asn-121 and Arg-152. His-176 acts as the Proton acceptor in catalysis.

It belongs to the LDH/MDH superfamily.

The catalysed reaction is (S)-malate + NAD(+) = oxaloacetate + NADH + H(+). In terms of biological role, catalyzes the reversible oxidation of malate to oxaloacetate. This is Malate dehydrogenase (mdh) from Natronomonas pharaonis (strain ATCC 35678 / DSM 2160 / CIP 103997 / JCM 8858 / NBRC 14720 / NCIMB 2260 / Gabara) (Halobacterium pharaonis).